Here is a 101-residue protein sequence, read N- to C-terminus: Acylphosphatase-1 (101 aa).

Position 2 is an N-acetylserine (S2). S2 bears the N-acetylalanine mark. One can recognise an Acylphosphatase-like domain in the interval 11–101 (SVDYEVFGKV…LDYSDFQIVK (91 aa)). Catalysis depends on residues R26 and N44.

Belongs to the acylphosphatase family. Organ-common type isozyme is found in many different tissues.

It catalyses the reaction an acyl phosphate + H2O = a carboxylate + phosphate + H(+). In Sus scrofa (Pig), this protein is Acylphosphatase-1 (ACYP1).